A 134-amino-acid polypeptide reads, in one-letter code: Profilin-4 (134 aa).

Cysteines 13 and 118 form a disulfide. The Involved in PIP2 interaction signature appears at 84-100; it reads AVIRGKKGSGGITIKKT. Thr-114 carries the post-translational modification Phosphothreonine.

The protein belongs to the profilin family. In terms of assembly, occurs in many kinds of cells as a complex with monomeric actin in a 1:1 ratio. Post-translationally, phosphorylated by MAP kinases.

The protein localises to the cytoplasm. It is found in the cytoskeleton. Its function is as follows. Binds to actin and affects the structure of the cytoskeleton. At high concentrations, profilin prevents the polymerization of actin, whereas it enhances it at low concentrations. This Olea europaea (Common olive) protein is Profilin-4.